The following is a 730-amino-acid chain: Denticleless protein homolog (730 aa).

N-acetylmethionine is present on M1. WD repeat units lie at residues 47–89, 96–135, and 138–178; these read GVPV…FRKK, AHWN…LIGT, and GHQC…KDGF. Residues 168–171 carry the DDB1-binding motif motif; sequence WDTR. Polar residues predominate over residues 188 to 198; sequence AHNTSDKQTPS. The interval 188-210 is disordered; that stretch reads AHNTSDKQTPSKPKKKQNSKGLA. At T196 the chain carries Phosphothreonine. Positions 197-203 match the Nuclear localization signal motif; sequence PSKPKKK. 4 WD repeats span residues 214-253, 267-308, 313-354, and 358-398; these read DFQQ…TAYR, SSTR…TSPV, GHQN…QPPT, and GHSQ…EEKP. The DDB1-binding motif motif lies at 243–246; the sequence is WDLR. The interval 399 to 443 is disordered; sequence GGDKLSTVGWASQKKKESRPGLVTVTSSQSTPAKAPRAKCNPSNS. Phosphoserine is present on residues S410 and S426. T464 carries the phosphothreonine; by CDK1 and CDK2 modification. The tract at residues 465–498 is disordered; it reads PTFSIKTSPAKARSPINRRGSVSSVSPKPPSSFK. 4 positions are modified to phosphoserine: S485, S490, S495, and S512. T516 is modified (phosphothreonine). S557 bears the Phosphoserine mark. 2 disordered regions span residues 599–631 and 644–703; these read SKDS…YASE and GEGS…TITP. Residues S676 and S679 each carry the phosphoserine modification. Residues 679–689 are compositionally biased toward polar residues; that stretch reads SPSSQTPNSRR. 2 positions are modified to phosphothreonine: T684 and T702. At S717 the chain carries Phosphoserine.

The protein belongs to the WD repeat cdt2 family. In terms of assembly, component of the DCX(DTL) E3 ubiquitin ligase complex (also called CRL4(CDT2)), at least composed of CUL4 (CUL4A or CUL4B), DDB1, DTL/CDT2 and RBX1. Interacts with CDKN1A. Interacts with DDB1. Interacts with FBXO11; SCF(FBXWO11) controls DTL stability but DCX(DTL) does not control FBXO11 stability. Interacts with CRY1. Ubiquitinated by the anaphase promoting complex/cyclosome (APC/C). Autoubiquitinated through 'Lys-48'-polyubiquitin chains in a PCNA-independent reaction, allowing proteasomal turnover. Polyubiquitinated by SCF(FBXO11) when not phosphorylated, leading to its degradation. A tight regulation of the polyubiquitination by SCF(FBXO11) is involved in the control of different processes such as TGF-beta signaling, cell cycle progression and exit. In terms of processing, phosphorylated at Thr-464 by CDK1/Cyclin-B and CDK2/Cyclin-A but not by CDK2/Cyclin-E, MAPK1 or PLK1. Phosphorylation at Thr-464 inhibits the interaction with FBXO11 and decreases upon cell cycle exit induced by TGF-beta or serum starvation. Expressed in placenta and testis, very low expression seen in skeletal muscle. Detected in all hematopoietic tissues examined, with highest expression in thymus and bone marrow. A low level detected in the spleen and lymph node, and barely detectable level in the peripheral leukocytes. RA treatment down-regulated the expression in NT2 cell.

The protein resides in the nucleus. It localises to the nucleus membrane. The protein localises to the cytoplasm. Its subcellular location is the cytoskeleton. It is found in the microtubule organizing center. The protein resides in the centrosome. It localises to the chromosome. It participates in protein modification; protein ubiquitination. Substrate-specific adapter of a DCX (DDB1-CUL4-X-box) E3 ubiquitin-protein ligase complex required for cell cycle control, DNA damage response and translesion DNA synthesis. The DCX(DTL) complex, also named CRL4(CDT2) complex, mediates the polyubiquitination and subsequent degradation of CDT1, CDKN1A/p21(CIP1), FBH1, KMT5A and SDE2. CDT1 degradation in response to DNA damage is necessary to ensure proper cell cycle regulation of DNA replication. CDKN1A/p21(CIP1) degradation during S phase or following UV irradiation is essential to control replication licensing. KMT5A degradation is also important for a proper regulation of mechanisms such as TGF-beta signaling, cell cycle progression, DNA repair and cell migration. Most substrates require their interaction with PCNA for their polyubiquitination: substrates interact with PCNA via their PIP-box, and those containing the 'K+4' motif in the PIP box, recruit the DCX(DTL) complex, leading to their degradation. In undamaged proliferating cells, the DCX(DTL) complex also promotes the 'Lys-164' monoubiquitination of PCNA, thereby being involved in PCNA-dependent translesion DNA synthesis. The DDB1-CUL4A-DTL E3 ligase complex regulates the circadian clock function by mediating the ubiquitination and degradation of CRY1. The sequence is that of Denticleless protein homolog (DTL) from Homo sapiens (Human).